Consider the following 884-residue polypeptide: MELRCGGLLFSSRFDSGNLAHVEKVDSVSGDGEGGAAGASAPFSSIASSPDYEFNVWTRPDCAETEFENGNRSWFYFSVRGGTPGKLIKINIMNMNKQSKLYSQGMAPFVRTLPTRPRWERIRDRPTFEMTETQFVLSFVHRFVEGRGATTFFAFCYPFSYSDCQDLLNQLDQRFLENHPTHSSPLDTIYYHREILCYSLDGLRVDLLTITSCHGLREDREPRLQQLFPDTGTPRPFCFTGKRIFFLSSRVHPGETPSSFVFNGFLDFILRPDDPRAQTLRRLFVFKLIPMLNPDGVVRGHYRTDSRGVNLNRQYLKPDAALHPAIYGAKAVLLYHHVHSRLHPQSPSEHQHSPCLPPDAPLSDLEKANHLRNEAHLGHTSDGDSPEDWTQTRPAEQKASGVWLMPQQCADAEQPAPDTIPPKESGVAYYVDLHGHASKRGCFMYGNSFSDESTQVENMLYPKLISLNSAHFDFQGCNFSEKNMYARDRRDGQSKEGSGRVAIYKASGIIHSYTLECNYNTGRSVNSIPAACHDNGRASPPPPPAFPSRYTVELFEQVGRAMAIAALDMAECNPWPRIVLSEHSSLTNLRAWMLKHVRSSRGLSSTVSGAVNKKRGSRTPPRSNSGLPVSCSENPLSRARSFSTGTSAGGSSSSQQNSPQMKNSPSFPFHGSRPTGLPGLGSSTQKVSHRVLGPVREPRSQDRRRRQQPLTHRPTSSSLAPSPNPTSSSPASSHSTGPCLLPSAFSVSGSSCSLLSSGDKPEAVMVIGKGLLGPRIPCIRTRLQVRPRLGQGSPPTCRGMSGSSGPTSPIPRTRESSEPEPGPHSAPGLPQAGPPRPRSAPAFSPISCSLSDSQSRICYSGGPLGQPEVCFGPKSPPLTVSPRV.

One can recognise a Peptidase M14 domain in the interval 157-570; that stretch reads YPFSYSDCQD…AMAIAALDMA (414 aa). His-252 and Glu-255 together coordinate Zn(2+). Disordered stretches follow at residues 343 to 364 and 376 to 401; these read HPQS…PLSD and HLGH…KASG. His-434 provides a ligand contact to Zn(2+). Glu-516 acts as the Proton donor/acceptor in catalysis. Disordered stretches follow at residues 603–737 and 784–859; these read LSST…HSTG and QVRP…RICY. A compositionally biased stretch (polar residues) spans 620-635; the sequence is PPRSNSGLPVSCSENP. Composition is skewed to low complexity over residues 641–666 and 714–737; these read SFST…NSPS and PTSS…HSTG. The residue at position 839 (Ser-839) is a Phosphoserine. Over residues 846–857 the composition is skewed to polar residues; that stretch reads ISCSLSDSQSRI.

This sequence belongs to the peptidase M14 family. It depends on Zn(2+) as a cofactor.

It is found in the cytoplasm. The protein localises to the cytosol. The protein resides in the nucleus. Its subcellular location is the cytoskeleton. It localises to the spindle. It is found in the midbody. The enzyme catalyses gamma-L-glutamyl-L-glutamyl-[protein] + H2O = L-glutamyl-[protein] + L-glutamate. It catalyses the reaction (L-glutamyl)(n+1)-gamma-L-glutamyl-L-glutamyl-[protein] + H2O = (L-glutamyl)(n)-gamma-L-glutamyl-L-glutamyl-[protein] + L-glutamate. The catalysed reaction is C-terminal L-alpha-aminoacyl-L-glutamyl-[tubulin] + H2O = C-terminal L-alpha-aminoacyl-[tubulin] + L-glutamate. It carries out the reaction C-terminal L-alpha-aminoacyl-L-glutamyl-L-glutamyl-[tubulin] + H2O = C-terminal L-alpha-aminoacyl-L-glutamyl-[tubulin] + L-glutamate. Its function is as follows. Metallocarboxypeptidase that mediates deglutamylation of tubulin and non-tubulin target proteins. Catalyzes the removal of polyglutamate side chains present on the gamma-carboxyl group of glutamate residues within the C-terminal tail of alpha- and beta-tubulin. Cleaves alpha- and gamma-linked polyglutamate tubulin side-chain, as well as the branching point glutamate. Also catalyzes the removal of alpha-linked glutamate residues from the carboxy-terminus of alpha-tubulin. Mediates deglutamylation of nucleotidyltransferase CGAS, leading to CGAS antiviral defense response activation. The protein is Cytosolic carboxypeptidase-like protein 5 (AGBL5) of Ailuropoda melanoleuca (Giant panda).